A 369-amino-acid polypeptide reads, in one-letter code: tRNA-specific 2-thiouridylase MnmA (369 aa).

ATP is bound by residues 7-14 and Met-33; that span reads GISGGVDS. The interval 93 to 95 is interaction with target base in tRNA; sequence NPD. The Nucleophile role is filled by Cys-98. Cys-98 and Cys-195 are joined by a disulfide. Gly-123 serves as a coordination point for ATP. Positions 145 to 147 are interaction with tRNA; it reads KDQ. The active-site Cysteine persulfide intermediate is Cys-195. The interval 307–308 is interaction with tRNA; that stretch reads RY.

This sequence belongs to the MnmA/TRMU family. In terms of assembly, interacts with TusE.

It localises to the cytoplasm. The catalysed reaction is S-sulfanyl-L-cysteinyl-[protein] + uridine(34) in tRNA + AH2 + ATP = 2-thiouridine(34) in tRNA + L-cysteinyl-[protein] + A + AMP + diphosphate + H(+). In terms of biological role, catalyzes the 2-thiolation of uridine at the wobble position (U34) of tRNA(Lys), tRNA(Glu) and tRNA(Gln), leading to the formation of s(2)U34, the first step of tRNA-mnm(5)s(2)U34 synthesis. Sulfur is provided by IscS, via a sulfur-relay system. Binds ATP and its substrate tRNAs. This is tRNA-specific 2-thiouridylase MnmA from Blochmanniella floridana.